The chain runs to 441 residues: BTB/POZ domain-containing protein At2g24240 (441 aa).

The BTB domain occupies 6-76; sequence DRIKFNVGGR…LRTGDLNVPA (71 aa).

The protein operates within protein modification; protein ubiquitination. In terms of biological role, may act as a substrate-specific adapter of an E3 ubiquitin-protein ligase complex (CUL3-RBX1-BTB) which mediates the ubiquitination and subsequent proteasomal degradation of target proteins. The chain is BTB/POZ domain-containing protein At2g24240 from Arabidopsis thaliana (Mouse-ear cress).